A 186-amino-acid polypeptide reads, in one-letter code: DNA-invertase (186 aa).

The 134-residue stretch at 1 to 134 (MLIGYVRVST…AGLDAARAEG (134 aa)) folds into the Resolvase/invertase-type recombinase catalytic domain. S9 (O-(5'-phospho-DNA)-serine intermediate) is an active-site residue. The segment at residues 161-180 (RKQVAIIYDVAVSTLYKKFP) is a DNA-binding region (H-T-H motif).

It belongs to the site-specific recombinase resolvase family.

Performs inversion of a viral 3 kp segment (C-segment) that encodes two alternate pairs of tail fiber proteins thereby modifying the host specificity of the virus. This chain is DNA-invertase (cin), found in Enterobacteriaceae (Bacteriophage P1).